We begin with the raw amino-acid sequence, 310 residues long: Methionyl-tRNA formyltransferase (310 aa).

109-112 is a (6S)-5,6,7,8-tetrahydrofolate binding site; the sequence is SLLP.

Belongs to the Fmt family.

It catalyses the reaction L-methionyl-tRNA(fMet) + (6R)-10-formyltetrahydrofolate = N-formyl-L-methionyl-tRNA(fMet) + (6S)-5,6,7,8-tetrahydrofolate + H(+). Attaches a formyl group to the free amino group of methionyl-tRNA(fMet). The formyl group appears to play a dual role in the initiator identity of N-formylmethionyl-tRNA by promoting its recognition by IF2 and preventing the misappropriation of this tRNA by the elongation apparatus. The sequence is that of Methionyl-tRNA formyltransferase from Staphylococcus epidermidis (strain ATCC 35984 / DSM 28319 / BCRC 17069 / CCUG 31568 / BM 3577 / RP62A).